The chain runs to 100 residues: MDLTPREKDKLQIFTAGLLAERRKARGLRLNYPEAVALITCAILEGARDGNTVAELMSEGRKVLTRADVMEGVPEMIPDIQVEATFPDGTKLVTVHNPIV.

The protein belongs to the urease gamma subunit family. As to quaternary structure, heterotrimer of UreA (gamma), UreB (beta) and UreC (alpha) subunits. Three heterotrimers associate to form the active enzyme.

It is found in the cytoplasm. It carries out the reaction urea + 2 H2O + H(+) = hydrogencarbonate + 2 NH4(+). Its pathway is nitrogen metabolism; urea degradation; CO(2) and NH(3) from urea (urease route): step 1/1. The polypeptide is Urease subunit gamma (Nitrosospira multiformis (strain ATCC 25196 / NCIMB 11849 / C 71)).